Here is a 396-residue protein sequence, read N- to C-terminus: Subtilisin-like protease 5 (396 aa).

A signal peptide spans 1 to 20 (MTGFFTILSFSLAALSVTNA). Residues 21 to 116 (AQILSVPKGA…VEPDAIISQH (96 aa)) constitute a propeptide that is removed on maturation. An Inhibitor I9 domain is found at 37 to 113 (YIVVMKDDTS…VAFVEPDAII (77 aa)). The Peptidase S8 domain occupies 125-396 (PWGLSRLSNR…SRLLYNGSGR (272 aa)). Catalysis depends on charge relay system residues Asp-156 and His-187. N-linked (GlcNAc...) asparagine glycans are attached at residues Asn-230 and Asn-248. Ser-342 acts as the Charge relay system in catalysis. The span at 376-389 (PTIRNPGPDTTSRL) shows a compositional bias: polar residues. The interval 376 to 396 (PTIRNPGPDTTSRLLYNGSGR) is disordered. Asn-392 carries an N-linked (GlcNAc...) asparagine glycan.

Belongs to the peptidase S8 family.

It is found in the secreted. Its function is as follows. Secreted subtilisin-like serine protease with keratinolytic activity that contributes to pathogenicity. This is Subtilisin-like protease 5 (SUB5) from Arthroderma benhamiae (strain ATCC MYA-4681 / CBS 112371) (Trichophyton mentagrophytes).